The primary structure comprises 206 residues: Large ribosomal subunit protein bL25 (206 aa).

The protein belongs to the bacterial ribosomal protein bL25 family. CTC subfamily. As to quaternary structure, part of the 50S ribosomal subunit; part of the 5S rRNA/L5/L18/L25 subcomplex. Contacts the 5S rRNA. Binds to the 5S rRNA independently of L5 and L18.

Functionally, this is one of the proteins that binds to the 5S RNA in the ribosome where it forms part of the central protuberance. This chain is Large ribosomal subunit protein bL25, found in Bartonella henselae (strain ATCC 49882 / DSM 28221 / CCUG 30454 / Houston 1) (Rochalimaea henselae).